The chain runs to 395 residues: MVGTWFLCRGFTTLAGLLLLPFGSLAASQIEDQAEQFFRSGHTNNWAVLVCTSRFWFNYRHVANTLSVYRSVKRLGIPDSHIVLMLADDMACNPRNPKPATVYSHKNMELNVYGDDVEVDYRSYVVTVENFLRVLTGRIPPSTPRSKRLLSDDRSNILIYMTGHGGNGFLKFQDSEEITNIELADAFEQMWQKRRYNELLFIIDTCQGASMYERFYSPNIMALASSQVGEDSLSHQPDPAIGVHLMDRYTFYVLEFLEEINPASQTNMNDLFQVCPKSLCVSTPGHRTDPFQRDPKHVLITDFFGSVRKVEITTETISLQPDSGIMKSSHEKAGMDEELMEPLKYAEQLPVAQIIHQKPKLKDWHPPGGFILGLWALIIMVFFKTYGIKHMKFIF.

Positions 1–27 (MVGTWFLCRGFTTLAGLLLLPFGSLAA) are cleaved as a signal peptide. Topologically, residues 28–368 (SQIEDQAEQF…PKLKDWHPPG (341 aa)) are lumenal. Ca(2+) contacts are provided by D79, I82, E118, and D120. Catalysis depends on H164, which acts as the Proton donor. C206 (nucleophile; acyl-thioester intermediate) is an active-site residue. A protein-binding residues include C206, S232, and S234. An autoinhibitory loop region spans residues 231–236 (DSLSHQ). A disulfide bond links C275 and C280. The chain crosses the membrane as a helical span at residues 369–385 (GFILGLWALIIMVFFKT). Residues 386 to 395 (YGIKHMKFIF) lie on the Cytoplasmic side of the membrane.

The protein belongs to the peptidase C13 family. Heteropentamer. Part of the GPI-anchor transamidase complex, consisting of PIGK, PIGT, PIGS, PIGU and GAA1. Interacts with GPAA1. Interacts with PIGT; this interaction, via a disulfide link, stabilizes the expression of GAA1 and PIGK and links them to PIGS. In terms of processing, the disulfide bond between PIGK/GPI8 and PIGT is important for normal enzyme activity.

It is found in the endoplasmic reticulum membrane. The protein operates within glycolipid biosynthesis; glycosylphosphatidylinositol-anchor biosynthesis. In the absence of proproteins substrates, exists in an inactive state with a disrupted catalytic site by an autoinhibitory loop. The binding of proprotein substrates, particularly the CSP region, to GPI-T triggers concerted conformational changes that alleviate the inhibition by the autoinhibitory loop. Meanwhile, proprotein residues near the omega- site induce the formation of a catalytic cleft for catalysis, following which the products are released and GPI-T reverts to the inactive state. In terms of biological role, catalytic subunit of the glycosylphosphatidylinositol-anchor (GPI-anchor) transamidase (GPI-T) complex that catalyzes the formation of the linkage between a proprotein and a GPI-anchor and participates in GPI anchored protein biosynthesis. Recognizes diverse proproteins at a C-terminal signal peptide (CSP) region that lacks consensus sequence and replaces it with a GPI-anchor via a transamidation reaction. Transamidation catalysis reaction follows a two-phase mechanism. In the acyl-enzyme phase, the carbonyl group of the proproteins's omega-site undergoes a nucleophilic attack forming an enzyme-substrate thioester bond. Followed by a general acid catalysis that allows CSP releasing, regenerating the carbonyl, and forming the acyl-enzyme intermediate. In the GPI-anchor attachment phase, the amino group of the GPI-anchor's ethanolamine phosphate, the one on third mannose (EtNP3), mediates a nucleophilic attack on the carbonyl of the acyl-enzyme intermediate, replacing the CSP, allowing GPI-anchor attachment to the omega-residue, therefore forming the product and freeing the enzyme. The protein is GPI-anchor transamidase of Sus scrofa (Pig).